Reading from the N-terminus, the 1199-residue chain is Metabotropic glutamate receptor 1 (1199 aa).

Positions 1-20 (MVRLLLIFFPMIFLEMSILP) are cleaved as a signal peptide. Topologically, residues 21 to 592 (RMPDRKVLLA…IRYLEWSDIE (572 aa)) are extracellular. An intrachain disulfide couples cysteine 67 to cysteine 109. An L-glutamate-binding site is contributed by tyrosine 74. An N-linked (GlcNAc...) asparagine glycan is attached at asparagine 98. L-glutamate contacts are provided by residues serine 165 and 186–188 (SAT). Asparagine 223 carries an N-linked (GlcNAc...) asparagine glycan. L-glutamate is bound at residue tyrosine 236. A disulfide bridge connects residues cysteine 289 and cysteine 291. Position 318 (aspartate 318) interacts with L-glutamate. The cysteines at positions 378 and 394 are disulfide-linked. Asparagine 397 carries N-linked (GlcNAc...) asparagine glycosylation. An L-glutamate-binding site is contributed by lysine 409. Cysteines 432 and 439 form a disulfide. The N-linked (GlcNAc...) asparagine glycan is linked to asparagine 515. Residues 593 to 615 (SIIAIAFSCLGILVTLFVTLIFV) traverse the membrane as a helical segment. Residues 616–629 (LYRDTPVVKSSSRE) are Cytoplasmic-facing. Residues 630-650 (LCYIILAGIFLGYVCPFTLIA) form a helical membrane-spanning segment. Topologically, residues 651–658 (KPTTTSCY) are extracellular. Cysteine 657 and cysteine 746 are oxidised to a cystine. Residues 659–680 (LQRLLVGLSSAMCYSALVTKTN) traverse the membrane as a helical segment. The Cytoplasmic portion of the chain corresponds to 681–703 (RIARILAGSKKKICTRKPRFMSA). A helical transmembrane segment spans residues 704–727 (WAQVIIASILISVQLTLVVTLIIM). Residues 728–750 (EPPMPILSYPSIKEVYLICNTSN) lie on the Extracellular side of the membrane. An N-linked (GlcNAc...) asparagine glycan is attached at asparagine 747. Residues 751 to 772 (LGVVAPVGYNGLLIMSCTYYAF) form a helical membrane-spanning segment. The Cytoplasmic portion of the chain corresponds to 773–785 (KTRNVPANFNEAK). Residues 786-807 (YIAFTMYTTCIIWLAFVPIYFG) form a helical membrane-spanning segment. At 808 to 815 (SNYKIITT) the chain is on the extracellular side. A helical membrane pass occupies residues 816–840 (CFAVSLSVTVALGCMFTPKMYIIIA). Topologically, residues 841–1199 (KPERNVRSAF…RDYKQSSSTL (359 aa)) are cytoplasmic. Serine 853 bears the Phosphoserine mark. The residue at position 871 (threonine 871) is a Phosphothreonine. Disordered stretches follow at residues 882 to 906 (GAGN…APKG), 959 to 1035 (EEDN…QPKS), and 1055 to 1082 (HAVL…QHLQ). Over residues 885-895 (NANSNGKSVSW) the composition is skewed to polar residues. Phosphoserine is present on residues serine 894 and serine 969. The span at 1012–1032 (GLPPPLPQQQQQPPPQPPPQQ) shows a compositional bias: pro residues. Residue serine 1097 is modified to Phosphoserine. Positions 1118-1177 (VYEREGNTEEDDLEEEEDLPAASKLTPEDSPALTPPSPFRDSVASGSSVPSSPVSESVLC) are disordered. Positions 1125–1136 (TEEDDLEEEEDL) are enriched in acidic residues. Phosphoserine is present on serine 1147. Threonine 1151 carries the phosphothreonine modification. Residue serine 1154 is modified to Phosphoserine. A compositionally biased stretch (low complexity) spans 1159 to 1175 (SVASGSSVPSSPVSESV).

Belongs to the G-protein coupled receptor 3 family. As to quaternary structure, homodimer; disulfide-linked. The PPXXF motif binds HOMER1, HOMER2 and HOMER3. Interacts with TAMALIN. Interacts with RYR1, RYR2, ITPR1, SHANK1 and SHANK3. Interacts with SHIA1. In terms of tissue distribution, expressed in the striatum (at protein level). Expressed in type II unipolar brush cells of the cerebellum (at protein level).

Its subcellular location is the cell membrane. The protein localises to the postsynaptic cell membrane. It localises to the cell projection. The protein resides in the dendrite. Its function is as follows. G-protein coupled receptor for glutamate. Ligand binding causes a conformation change that triggers signaling via guanine nucleotide-binding proteins (G proteins) and modulates the activity of down-stream effectors. Signaling activates a phosphatidylinositol-calcium second messenger system. May participate in the central action of glutamate in the CNS, such as long-term potentiation in the hippocampus and long-term depression in the cerebellum (By. similarity). May function in the light response in the retina. Induces GRID1 and GRID2 cation-channel activation via GNAQ-PLC-PKC pathway in dopaminergic neurons and cerebellar Purkinje cell, respectively. The protein is Metabotropic glutamate receptor 1 (Grm1) of Mus musculus (Mouse).